Here is an 891-residue protein sequence, read N- to C-terminus: DNA polymerase I (891 aa).

The region spanning 1–313 (MEQPVIKEGT…LLDNTPALDN (313 aa)) is the 5'-3' exonuclease domain. In terms of domain architecture, 3'-5' exonuclease spans 314 to 488 (TPKKSCMIVL…RLCEYFEKGG (175 aa)). Positions 492–890 (NLLSLAREIE…FIAKRWNELK (399 aa)) are polymerase.

It belongs to the DNA polymerase type-A family. In terms of assembly, single-chain monomer with multiple functions.

It carries out the reaction DNA(n) + a 2'-deoxyribonucleoside 5'-triphosphate = DNA(n+1) + diphosphate. Its function is as follows. In addition to polymerase activity, this DNA polymerase exhibits 3'-5' and 5'-3' exonuclease activity. This is DNA polymerase I (polA) from Helicobacter pylori (strain ATCC 700392 / 26695) (Campylobacter pylori).